Here is a 186-residue protein sequence, read N- to C-terminus: MGLLDRLSGLLGLKKKEVHVLCLGLDNSGKTTIINKLKPSNAQSQDIVPTIGFSIEKFKSSSLSFTVFDMSGQGRYRNLWEHYYKDGQAIIFVIDSSDKLRMVVAKEELDTLLNHPDIKHRRIPILFFANKMDLRDSVTSVKVSQLLCLESIKDKPWHICASDAIKGEGLQEGVDWLQDQIQAVKT.

Glycine 2 carries the N-myristoyl glycine lipid modification. GTP contacts are provided by residues 24–31 (GLDNSGKT), threonine 50, 69–73 (DMSGQ), glycine 72, 130–133 (NKMD), and alanine 164. Mg(2+) is bound at residue threonine 50.

Belongs to the small GTPase superfamily. Arf family. As to quaternary structure, interacts with SEC61B, ARL6IP1, ARL6IP2, ARL6IP3, ARL6IP4 ARL6IP5 and ARL6IP6. Interacts (GTP-bound form) with the BBSome a complex that contains BBS1, BBS2, BBS4, BBS5, BBS7, BBS8/TTC8, BBS9 and BBIP10. Interacts (GTP-free form) with IFT27. Most abundant in brain and kidney. Expressed in heart and eye. Isoform 2 is expressed only in the retina.

Its subcellular location is the cell projection. The protein localises to the cilium membrane. It is found in the cytoplasm. The protein resides in the cytoskeleton. It localises to the cilium axoneme. Its subcellular location is the cilium basal body. Its function is as follows. Involved in membrane protein trafficking at the base of the ciliary organelle. Mediates recruitment onto plasma membrane of the BBSome complex which would constitute a coat complex required for sorting of specific membrane proteins to the primary cilia. Together with BBS1, is necessary for correct trafficking of PKD1 to primary cilia. Together with the BBSome complex and LTZL1, controls SMO ciliary trafficking and contributes to the sonic hedgehog (SHH) pathway regulation. May regulate cilia assembly and disassembly and subsequent ciliary signaling events such as the Wnt signaling cascade. Isoform 2 may be required for proper retinal function and organization. The chain is ADP-ribosylation factor-like protein 6 (Arl6) from Mus musculus (Mouse).